The sequence spans 449 residues: MARNMAHILHILVISLSYSFLFVSSSSQDSQSLYHNSQPTSSKPNLLVLPVQEDASTGLHWANIHKRTPLMQVPLLLDLNGKHLWVTCSQHYSSSTYQAPFCHSTQCSRANTHQCFTCTDSTTTRPGCHNNTCGLLSSNPVTQESGLGELAQDVLAIHSTHGSKLGPMVKVPQFLFSCAPSFLAQKGLPNNVQGALGLGQAPISLQNQLFSHFGLKRQFSVCLSRYSTSNGAILFGDINDPNNNNYIHNSLDVLHDLVYTPLTISKQGEYFIQVNAIRVNKHLVIPTKNPFISPSSTSYHGSGEIGGALITTTHPYTVLSHSIFEVFTQVFANNMPKQAQVKAVGPFGLCYDSRKISGGAPSVDLILDKNDAVWRISSENFMVQAQDGVSCLGFVDGGVHARAGIALGAHHLEENLVVFDLERSRVGFNSNSLKSYGKTCSNLFDLNNP.

The signal sequence occupies residues 1-33 (MARNMAHILHILVISLSYSFLFVSSSSQDSQSL). One can recognise a Peptidase A1 domain in the interval 60 to 429 (HWANIHKRTP…DLERSRVGFN (370 aa)). Intrachain disulfides connect Cys-88-Cys-178, Cys-102-Cys-115, Cys-107-Cys-133, Cys-118-Cys-128, and Cys-350-Cys-391. N-linked (GlcNAc...) asparagine glycosylation is present at Asn-130.

The protein belongs to the peptidase A1 family. Two-subunit monomeric unit made of alpha and beta subunits coupled by disulfide bonds (at pH 4.5 and under non-reducing conditions). Can also form oligomers including dimer, tetramer and cyclic hexamer (trimer of dimers) (at pH &gt; 5.5). Component of globulins complexes which accumulate in seeds. Interacts with flavonoids (e.g. apigenin glucosides) present in globulins complexes. Forms a static complex with vitexin. Post-translationally, undergoes very complex post-translational maturation; the proteolytic processing leading to the formation of two alpha and beta subunits is incomplete, leaving a certain amount of the protein in an uncut form. In terms of processing, glycosylated on alpha chain. As to expression, expressed in developing cotyledons and in the embryonic axis of germinating seeds. Accumulates in seeds, especially in the protein bodies of developing cotyledonary cells (at protein level). Also detected, at low levels, in plumules and radicles.

It localises to the secreted. Its subcellular location is the extracellular space. Its function is as follows. Sulfur-rich seed storage protein that remains undegraded at germination. The protein is Gamma conglutin 1 of Lupinus angustifolius (Narrow-leaved blue lupine).